The sequence spans 225 residues: Ribonuclease HII (225 aa).

One can recognise an RNase H type-2 domain in the interval 2-210; that stretch reads GIVVGVDEAG…VRKLGGPWRS (209 aa). D8, E9, and D107 together coordinate a divalent metal cation.

Belongs to the RNase HII family. The cofactor is Mn(2+). Mg(2+) is required as a cofactor.

The protein resides in the cytoplasm. It carries out the reaction Endonucleolytic cleavage to 5'-phosphomonoester.. Functionally, endonuclease that specifically degrades the RNA of RNA-DNA hybrids. The polypeptide is Ribonuclease HII (rnhB) (Aeropyrum pernix (strain ATCC 700893 / DSM 11879 / JCM 9820 / NBRC 100138 / K1)).